The sequence spans 879 residues: Interference hedgehog (879 aa).

An N-terminal signal peptide occupies residues 1–20; the sequence is MTLLTSSLLLFSLLTSRLEA. Residues 21 to 703 are Extracellular-facing; the sequence is IPVLEKSPAH…ETFNMSPMLT (683 aa). 4 consecutive Ig-like C2-type domains span residues 45–142, 132–232, 252–340, and 346–432; these read PGVR…IARL, PLVV…ERIQ, PHLL…YIKV, and PQIV…LQVN. 4 disulfides stabilise this stretch: Cys68-Cys126, Cys173-Cys220, Cys276-Cys324, and Cys367-Cys414. N-linked (GlcNAc...) asparagine glycosylation is found at Asn102 and Asn209. Residues 426-467 are disordered; sequence GTLLQVNPKQIQEPRESGGTHRPKPNQGSKQKQMYPPSPPNV. 2 Fibronectin type-III domains span residues 461–567 and 575–670; these read PPSP…LQPG and VPEL…TQRP. Asn466 carries an N-linked (GlcNAc...) asparagine glycan. Heparin is bound by residues Arg497, Lys501, Lys503, and Arg541. Residue Asn557 is glycosylated (N-linked (GlcNAc...) asparagine). The interval 662–698 is disordered; the sequence is LKQGRTQRPKTSTTEEPTLQMGDRDTTTPSHNETFNM. 2 stretches are compositionally biased toward polar residues: residues 665-678 and 688-698; these read GRTQRPKTSTTEEP and TTPSHNETFNM. An N-linked (GlcNAc...) asparagine glycan is attached at Asn693. A helical transmembrane segment spans residues 704–724; it reads GTLGGGAVLTLLLISICLCVC. Over 725–879 the chain is Cytoplasmic; that stretch reads RRRSSRSRGN…SSGSLNSVGV (155 aa). Positions 728–879 are disordered; sequence SSRSRGNNPN…SSGSLNSVGV (152 aa). Composition is skewed to low complexity over residues 822–836 and 863–879; these read RAGGSNGSNNGNNNN and SSRSENLSSGSLNSVGV.

This sequence belongs to the immunoglobulin superfamily. IHOG family. In terms of assembly, homodimer. Heterotetramer; 2 iHog chains bind 2 hh chains when facilitated by heparin, heparin is required to promote high-affinity interactions between hh and iHog.

The protein localises to the membrane. Mediates response to the active Hedgehog (Hh) protein signal in embryos, functioning upstream or at the level of patched (ptc). This is Interference hedgehog from Drosophila erecta (Fruit fly).